The chain runs to 250 residues: Small ribosomal subunit protein uS2 (250 aa).

This sequence belongs to the universal ribosomal protein uS2 family.

This Paracidovorax citrulli (strain AAC00-1) (Acidovorax citrulli) protein is Small ribosomal subunit protein uS2.